A 301-amino-acid polypeptide reads, in one-letter code: Probable alpha-L-glutamate ligase (301 aa).

The ATP-grasp domain maps to 104 to 287; it reads LQLLSRRGIG…VAGMIIGYLE (184 aa). ATP is bound by residues Lys141, 178-179, Asp187, and 211-213; these read EY and RSN. Residues Asp248, Glu260, and Asn262 each contribute to the Mg(2+) site. Mn(2+) is bound by residues Asp248, Glu260, and Asn262.

The protein belongs to the RimK family. It depends on Mg(2+) as a cofactor. Mn(2+) serves as cofactor.

The protein is Probable alpha-L-glutamate ligase of Pseudomonas syringae pv. syringae (strain B728a).